Reading from the N-terminus, the 928-residue chain is Retinoblastoma-associated protein (928 aa).

The segment at 1-42 (MPPKTPRKTAATAAAAAAEPPAPPPPPPPEEDPEQDSGPEDL) is disordered. P2 carries the post-translational modification N,N-dimethylproline. The span at 8–19 (KTAATAAAAAAE) shows a compositional bias: low complexity. Residues 29–39 (PEEDPEQDSGP) are compositionally biased toward acidic residues. At S37 the chain carries Phosphoserine. S249 carries the post-translational modification Phosphoserine; by CDK1. Position 252 is a phosphothreonine; by CDK1 (T252). T356 is modified (phosphothreonine). Phosphothreonine; by CDK1 is present on T373. Positions 373 to 579 (TPVRTVMNTI…FDLIKQSKDR (207 aa)) are domain A. The segment at 373-771 (TPVRTVMNTI…QRLKTNILQY (399 aa)) is pocket; binds T and E1A. A Phosphoserine; by CDK2 modification is found at S567. Residues 580 to 639 (EGPTDHLESACPLNLPLQNNHTAADMYLSPVRSPKKKGSTTRVNSTANAETQATSAFQTQ) form a spacer region. S608 carries the post-translational modification Phosphoserine. Positions 610–632 (VRSPKKKGSTTRVNSTANAETQA) are disordered. S612 is subject to Phosphoserine; by CHEK2 and CHEK1. Polar residues predominate over residues 619–632 (TTRVNSTANAETQA). Phosphoserine is present on S624. The interval 640–771 (KPLKSTSLSL…QRLKTNILQY (132 aa)) is domain B. Residues 763-928 (RLKTNILQYA…SMDTSNKEEK (166 aa)) are interaction with LIMD1. The segment at 771 to 928 (YASTRPPTLS…SMDTSNKEEK (158 aa)) is domain C; mediates interaction with E4F1. Residues S780, S788, and S795 each carry the phosphoserine modification. S807 is subject to Phosphoserine; by CDK1 and CDK3. K810 is modified (N6-methyllysine; by SMYD2). Residue S811 is modified to Phosphoserine; by CDK1 and CDK3. At T821 the chain carries Phosphothreonine; by CDK6. T823 carries the phosphothreonine modification. T826 is subject to Phosphothreonine; by CDK4. Residue T841 is modified to Phosphothreonine. S855 carries the phosphoserine modification. K860 carries the N6-methyllysine; by SMYD2 modification. Residues 860–876 (KRSAEGSNPPKPLKKLR) carry the Bipartite nuclear localization signal motif. Positions 860–928 (KRSAEGSNPP…SMDTSNKEEK (69 aa)) are disordered. N6-acetyllysine; by PCAF is present on residues K873 and K874. Residues 915-928 (KMNDSMDTSNKEEK) are compositionally biased toward basic and acidic residues.

The protein belongs to the retinoblastoma protein (RB) family. The hypophosphorylated form interacts with and sequesters the E2F1 transcription factor, thereby inhibiting E2F1 transcription. Interacts with heterodimeric E2F/DP transcription factor complexes containing TFDP1 and either E2F1, E2F3, E2F4 or E2F5, or TFDP2 and E2F4. Interacts (when hyperphosphorylated and hypophosphorylated) with PKP3; the interaction inhibits RB1 interaction with and repression of the transcription factor E2F1, potentially via sequestering RB1 to the cytoplasm. The unphosphorylated form interacts with EID1, ARID3B, KDM5A, SUV39H1, MJD2A/JHDM3A and THOC1. Interacts with the N-terminal domain of TAF1. Interacts with SNW1, ATAD5, AATF, DNMT1, LIN9, LMNA, KMT5B, KMT5C, PELP1, UHRF2 and TMPO-alpha. Interacts with GRIP1 and UBR4. Interacts with ARID4A and KDM5B. Interacts with E4F1 and LIMD1. Interacts with SMARCA4/BRG1 and HDAC1. Interacts with PSMA3 and USP4. Interacts (when methylated at Lys-860) with L3MBTL1. Interacts with CHEK2; phosphorylates RB1. Interacts with CDK1 and CDK2. Interacts with PRMT2. Interacts with CEBPA. P-TEFB complex interacts with RB1; promotes phosphorylation of RB1. Interacts with RBBP9; the interaction disrupts RB1 binding to E2F1. Interacts with KAT2B/PCAF and EP300/P300. Interacts with PAX5. Interacts (phosphorylated and unphosphorylated) with BLCAP. May interact with NDC80. In terms of assembly, (Microbial infection) Interacts with adenovirus E1A protein. As to quaternary structure, (Microbial infection) Interacts with HPV E7 protein. (Microbial infection) Interacts with SV40 large T antigen. In terms of assembly, (Microbial infection) Interacts with human cytomegalovirus/HHV-5 proteins UL82 and UL123. As to quaternary structure, (Microbial infection) Interacts with molluscum contagiosum virus protein MC007. Phosphorylated by CDK6 and CDK4, and subsequently by CDK2 at Ser-567 in G1, thereby releasing E2F1 which is then able to activate cell growth. Dephosphorylated at the late M phase. SV40 large T antigen, HPV E7 and adenovirus E1A bind to the underphosphorylated, active form of pRb. Phosphorylation at Thr-821 and Thr-826 promotes interaction between the C-terminal domain C and the Pocket domain, and thereby inhibits interactions with heterodimeric E2F/DP transcription factor complexes. Dephosphorylated at Ser-795 by calcineruin upon calcium stimulation. CDK3/cyclin-C-mediated phosphorylation at Ser-807 and Ser-811 is required for G0-G1 transition. Phosphorylated by CDK1 and CDK2 upon TGFB1-mediated apoptosis. In terms of processing, N-terminus is methylated by METTL11A/NTM1. Monomethylation at Lys-810 by SMYD2 enhances phosphorylation at Ser-807 and Ser-811, and promotes cell cycle progression. Monomethylation at Lys-860 by SMYD2 promotes interaction with L3MBTL1. Post-translationally, acetylated during keratinocyte differentiation. Acetylation at Lys-873 and Lys-874 regulates subcellular localization. Can be deacetylated by SIRT1. In terms of tissue distribution, expressed in the retina. Expressed in foreskin keratinocytes (at protein level).

The protein localises to the nucleus. Its subcellular location is the cytoplasm. Tumor suppressor that is a key regulator of the G1/S transition of the cell cycle. The hypophosphorylated form binds transcription regulators of the E2F family, preventing transcription of E2F-responsive genes. Both physically blocks E2Fs transactivating domain and recruits chromatin-modifying enzymes that actively repress transcription. Cyclin and CDK-dependent phosphorylation of RB1 induces its dissociation from E2Fs, thereby activating transcription of E2F responsive genes and triggering entry into S phase. RB1 also promotes the G0-G1 transition upon phosphorylation and activation by CDK3/cyclin-C. Directly involved in heterochromatin formation by maintaining overall chromatin structure and, in particular, that of constitutive heterochromatin by stabilizing histone methylation. Recruits and targets histone methyltransferases SUV39H1, KMT5B and KMT5C, leading to epigenetic transcriptional repression. Controls histone H4 'Lys-20' trimethylation. Inhibits the intrinsic kinase activity of TAF1. Mediates transcriptional repression by SMARCA4/BRG1 by recruiting a histone deacetylase (HDAC) complex to the c-FOS promoter. In resting neurons, transcription of the c-FOS promoter is inhibited by BRG1-dependent recruitment of a phospho-RB1-HDAC1 repressor complex. Upon calcium influx, RB1 is dephosphorylated by calcineurin, which leads to release of the repressor complex. Its function is as follows. (Microbial infection) In case of viral infections, interactions with SV40 large T antigen, HPV E7 protein or adenovirus E1A protein induce the disassembly of RB1-E2F1 complex thereby disrupting RB1's activity. This Homo sapiens (Human) protein is Retinoblastoma-associated protein (RB1).